The primary structure comprises 382 residues: 8-amino-7-oxononanoate synthase (382 aa).

Residue Arg-26 participates in substrate binding. 104-105 provides a ligand contact to pyridoxal 5'-phosphate; sequence GY. Residue His-129 participates in substrate binding. Pyridoxal 5'-phosphate is bound by residues Ser-175, 200–203, and 232–235; these read DEAH and TLSK. Lys-235 is subject to N6-(pyridoxal phosphate)lysine. Substrate is bound at residue Thr-345.

Belongs to the class-II pyridoxal-phosphate-dependent aminotransferase family. BioF subfamily. Homodimer. Requires pyridoxal 5'-phosphate as cofactor.

The enzyme catalyses 6-carboxyhexanoyl-[ACP] + L-alanine + H(+) = (8S)-8-amino-7-oxononanoate + holo-[ACP] + CO2. It participates in cofactor biosynthesis; biotin biosynthesis. In terms of biological role, catalyzes the decarboxylative condensation of pimeloyl-[acyl-carrier protein] and L-alanine to produce 8-amino-7-oxononanoate (AON), [acyl-carrier protein], and carbon dioxide. This chain is 8-amino-7-oxononanoate synthase, found in Mycobacterium sp. (strain KMS).